Consider the following 463-residue polypeptide: Interstitial collagenase B (463 aa).

An N-terminal signal peptide occupies residues 1–17 (MPSLPLLLRLWAASSYS). Positions 18-96 (FPVIQDGLQK…PRCGVPDVAP (79 aa)) are cleaved as a propeptide — activation peptide. Residues 87–94 (PRCGVPDV) carry the Cysteine switch motif. Cys-89 is a Zn(2+) binding site. Residues 95–273 (APYAITHNNP…PIQLTDATLD (179 aa)) form a metalloprotease region. Ca(2+) is bound at residue Asp-155. 2 residues coordinate Zn(2+): His-165 and Asp-167. Residues Asp-172 and Gly-173 each coordinate Ca(2+). His-180 provides a ligand contact to Zn(2+). Positions 187 and 189 each coordinate Ca(2+). His-193 is a Zn(2+) binding site. Asp-195 contributes to the Ca(2+) binding site. Zn(2+) is bound at residue His-215. Residue Glu-216 is part of the active site. Positions 219 and 225 each coordinate Zn(2+). An intrachain disulfide couples Cys-275 to Cys-463. 2 Hemopexin repeats span residues 278–321 (GLTF…WPNL) and 322–368 (PGKF…FGFP). Asp-282 contributes to the Ca(2+) binding site. N-linked (GlcNAc...) asparagine glycosylation is present at Asn-370. Hemopexin repeat units follow at residues 371-419 (VTNI…FPGI) and 420-463 (DYKV…WFNC). 2 residues coordinate Ca(2+): Asp-375 and Asp-424.

The protein belongs to the peptidase M10A family. Ca(2+) is required as a cofactor. It depends on Zn(2+) as a cofactor.

Its subcellular location is the secreted. It localises to the extracellular space. The protein localises to the extracellular matrix. The catalysed reaction is Cleavage of the triple helix of collagen at about three-quarters of the length of the molecule from the N-terminus, at 775-Gly-|-Ile-776 in the alpha1(I) chain. Cleaves synthetic substrates and alpha-macroglobulins at bonds where P1' is a hydrophobic residue.. Its activity is regulated as follows. Can be activated without removal of the activation peptide. The chain is Interstitial collagenase B (Mmp1b) from Mus musculus (Mouse).